We begin with the raw amino-acid sequence, 311 residues long: Endosome-associated-trafficking regulator 1 (311 aa).

Residues 167–278 are a coiled coil; it reads RGNAENGTKN…KSENERLRLG (112 aa).

The protein belongs to the ENTR1 family.

It localises to the cytoplasm. The protein resides in the early endosome. Its subcellular location is the endosome. The protein localises to the recycling endosome. It is found in the midbody. It localises to the cytoskeleton. The protein resides in the microtubule organizing center. Its subcellular location is the centrosome. The protein localises to the cilium basal body. In terms of biological role, endosome-associated protein that plays a role in membrane receptor sorting, cytokinesis and ciliogenesis. This Danio rerio (Zebrafish) protein is Endosome-associated-trafficking regulator 1.